A 147-amino-acid polypeptide reads, in one-letter code: uncharacterized protein (147 aa).

The N-acetyltransferase domain occupies Leu7–Lys147.

This is an uncharacterized protein from Staphylococcus haemolyticus (strain JCSC1435).